The following is a 179-amino-acid chain: ATP synthase subunit delta (179 aa).

It belongs to the ATPase delta chain family. As to quaternary structure, F-type ATPases have 2 components, F(1) - the catalytic core - and F(0) - the membrane proton channel. F(1) has five subunits: alpha(3), beta(3), gamma(1), delta(1), epsilon(1). F(0) has three main subunits: a(1), b(2) and c(10-14). The alpha and beta chains form an alternating ring which encloses part of the gamma chain. F(1) is attached to F(0) by a central stalk formed by the gamma and epsilon chains, while a peripheral stalk is formed by the delta and b chains.

It is found in the cell membrane. Its function is as follows. F(1)F(0) ATP synthase produces ATP from ADP in the presence of a proton or sodium gradient. F-type ATPases consist of two structural domains, F(1) containing the extramembraneous catalytic core and F(0) containing the membrane proton channel, linked together by a central stalk and a peripheral stalk. During catalysis, ATP synthesis in the catalytic domain of F(1) is coupled via a rotary mechanism of the central stalk subunits to proton translocation. This protein is part of the stalk that links CF(0) to CF(1). It either transmits conformational changes from CF(0) to CF(1) or is implicated in proton conduction. In Natranaerobius thermophilus (strain ATCC BAA-1301 / DSM 18059 / JW/NM-WN-LF), this protein is ATP synthase subunit delta.